The chain runs to 335 residues: MDAIADPNFQQTKLRSTATEDIPSLLTVVLDISPRLWAEFDHRSGEKQSVTTVLKSLIVFLNSHLAFNSANQVAVIAAFSQGIQYLYPRSSDTSEQNAGNSKDLSIISSHMYRRFRNVDETLIEEFYKLYQREESLIDKPVQKSTLSGAMAAALTYTNRLTKEFESISLRSRLLVITCGSSREKDEIFQYIPIMNCIFSATKLKCPIDVIKIGGNKQSTFLQQTTDATNGVYIHLESTNGIIQYLSTAMSIDPSLRQIIVRPTQGSVDFRTSCYLTGKVVAIGYICSVCLCVLSIIPPGNKCPACDSQFDERVIAKLKKKPVVPKSTLKKVKKKV.

Residues 286–305 (CSVCLCVLSIIPPGNKCPAC) form a C4-type zinc finger.

This sequence belongs to the TFB4 family. As to quaternary structure, component of the 7-subunit TFIIH core complex composed of XPB/SSL2, XPD/RAD3, SSL1, TFB1, TFB2, TFB4 and TFB5, which is active in NER. The core complex associates with the 3-subunit CTD-kinase module TFIIK composed of CCL1, KIN28 and TFB3 to form the 10-subunit holoenzyme (holo-TFIIH) active in transcription.

The protein localises to the nucleus. Functionally, component of the general transcription and DNA repair factor IIH (TFIIH) core complex, which is involved in general and transcription-coupled nucleotide excision repair (NER) of damaged DNA and, when complexed to TFIIK, in RNA transcription by RNA polymerase II. In NER, TFIIH acts by opening DNA around the lesion to allow the excision of the damaged oligonucleotide and its replacement by a new DNA fragment. In transcription, TFIIH has an essential role in transcription initiation. When the pre-initiation complex (PIC) has been established, TFIIH is required for promoter opening and promoter escape. Phosphorylation of the C-terminal tail (CTD) of the largest subunit of RNA polymerase II by the kinase module TFIIK controls the initiation of transcription. This is General transcription and DNA repair factor IIH subunit TFB4 (TFB4) from Candida glabrata (strain ATCC 2001 / BCRC 20586 / JCM 3761 / NBRC 0622 / NRRL Y-65 / CBS 138) (Yeast).